The sequence spans 345 residues: Nicotinate-nucleotide--dimethylbenzimidazole phosphoribosyltransferase (345 aa).

E311 (proton acceptor) is an active-site residue.

Belongs to the CobT family.

It catalyses the reaction 5,6-dimethylbenzimidazole + nicotinate beta-D-ribonucleotide = alpha-ribazole 5'-phosphate + nicotinate + H(+). Its pathway is nucleoside biosynthesis; alpha-ribazole biosynthesis; alpha-ribazole from 5,6-dimethylbenzimidazole: step 1/2. Catalyzes the synthesis of alpha-ribazole-5'-phosphate from nicotinate mononucleotide (NAMN) and 5,6-dimethylbenzimidazole (DMB). In Janthinobacterium sp. (strain Marseille) (Minibacterium massiliensis), this protein is Nicotinate-nucleotide--dimethylbenzimidazole phosphoribosyltransferase.